Consider the following 158-residue polypeptide: SsrA-binding protein (158 aa).

The protein belongs to the SmpB family.

The protein localises to the cytoplasm. Functionally, required for rescue of stalled ribosomes mediated by trans-translation. Binds to transfer-messenger RNA (tmRNA), required for stable association of tmRNA with ribosomes. tmRNA and SmpB together mimic tRNA shape, replacing the anticodon stem-loop with SmpB. tmRNA is encoded by the ssrA gene; the 2 termini fold to resemble tRNA(Ala) and it encodes a 'tag peptide', a short internal open reading frame. During trans-translation Ala-aminoacylated tmRNA acts like a tRNA, entering the A-site of stalled ribosomes, displacing the stalled mRNA. The ribosome then switches to translate the ORF on the tmRNA; the nascent peptide is terminated with the 'tag peptide' encoded by the tmRNA and targeted for degradation. The ribosome is freed to recommence translation, which seems to be the essential function of trans-translation. The sequence is that of SsrA-binding protein from Caldicellulosiruptor saccharolyticus (strain ATCC 43494 / DSM 8903 / Tp8T 6331).